Here is a 46-residue protein sequence, read N- to C-terminus: Defensin-1 (46 aa).

Cystine bridges form between Cys3-Cys46, Cys14-Cys35, Cys20-Cys40, and Cys24-Cys42.

This sequence belongs to the DEFL family. As to expression, epidermis and vascular bundles of pods, stems, roots, leaves and wet or dry seeds.

Functionally, possesses antifungal activity sensitive to inorganic cations. The chain is Defensin-1 from Pisum sativum (Garden pea).